Reading from the N-terminus, the 216-residue chain is ATP-dependent Clp protease proteolytic subunit (216 aa).

Ser101 functions as the Nucleophile in the catalytic mechanism. His126 is a catalytic residue.

Belongs to the peptidase S14 family. As to quaternary structure, component of the chloroplastic Clp protease core complex.

Its subcellular location is the plastid. The protein resides in the chloroplast stroma. It catalyses the reaction Hydrolysis of proteins to small peptides in the presence of ATP and magnesium. alpha-casein is the usual test substrate. In the absence of ATP, only oligopeptides shorter than five residues are hydrolyzed (such as succinyl-Leu-Tyr-|-NHMec, and Leu-Tyr-Leu-|-Tyr-Trp, in which cleavage of the -Tyr-|-Leu- and -Tyr-|-Trp bonds also occurs).. Functionally, cleaves peptides in various proteins in a process that requires ATP hydrolysis. Has a chymotrypsin-like activity. Plays a major role in the degradation of misfolded proteins. The protein is ATP-dependent Clp protease proteolytic subunit of Zea mays (Maize).